A 203-amino-acid polypeptide reads, in one-letter code: Urease accessory protein UreG (203 aa).

14 to 21 (GPVGSGKT) lines the GTP pocket.

It belongs to the SIMIBI class G3E GTPase family. UreG subfamily. Homodimer. UreD, UreF and UreG form a complex that acts as a GTP-hydrolysis-dependent molecular chaperone, activating the urease apoprotein by helping to assemble the nickel containing metallocenter of UreC. The UreE protein probably delivers the nickel.

Its subcellular location is the cytoplasm. In terms of biological role, facilitates the functional incorporation of the urease nickel metallocenter. This process requires GTP hydrolysis, probably effectuated by UreG. This chain is Urease accessory protein UreG, found in Rhizobium johnstonii (strain DSM 114642 / LMG 32736 / 3841) (Rhizobium leguminosarum bv. viciae).